We begin with the raw amino-acid sequence, 223 residues long: Small ribosomal subunit protein uS3 (223 aa).

A KH type-2 domain is found at 39-117 (IREFLRKKPS…RPELNAKLVA (79 aa)).

It belongs to the universal ribosomal protein uS3 family. As to quaternary structure, part of the 30S ribosomal subunit. Forms a tight complex with proteins S10 and S14.

Functionally, binds the lower part of the 30S subunit head. Binds mRNA in the 70S ribosome, positioning it for translation. The chain is Small ribosomal subunit protein uS3 from Chlamydia abortus (strain DSM 27085 / S26/3) (Chlamydophila abortus).